The primary structure comprises 901 residues: Aconitate hydratase A (901 aa).

[4Fe-4S] cluster is bound by residues Cys443, Cys509, and Cys512.

This sequence belongs to the aconitase/IPM isomerase family. As to quaternary structure, monomer. [4Fe-4S] cluster is required as a cofactor.

The catalysed reaction is citrate = D-threo-isocitrate. It carries out the reaction (2S,3R)-3-hydroxybutane-1,2,3-tricarboxylate = 2-methyl-cis-aconitate + H2O. It functions in the pathway carbohydrate metabolism; tricarboxylic acid cycle; isocitrate from oxaloacetate: step 2/2. The protein operates within organic acid metabolism; propanoate degradation. In terms of biological role, involved in the catabolism of short chain fatty acids (SCFA) via the tricarboxylic acid (TCA)(acetyl degradation route) and probably the 2-methylcitrate cycle I (propionate degradation route). Catalyzes the reversible isomerization of citrate to isocitrate via cis-aconitate. Could catalyze the hydration of 2-methyl-cis-aconitate to yield (2R,3S)-2-methylisocitrate. The apo form of AcnA functions as a RNA-binding regulatory protein. In Staphylococcus aureus (strain COL), this protein is Aconitate hydratase A (acnA).